Consider the following 382-residue polypeptide: D-galactonate dehydratase (382 aa).

Asp183 is a binding site for Mg(2+). His185 acts as the Proton donor in catalysis. Mg(2+)-binding residues include Glu209 and Glu235. His285 (proton acceptor) is an active-site residue.

It belongs to the mandelate racemase/muconate lactonizing enzyme family. GalD subfamily. The cofactor is Mg(2+).

The enzyme catalyses D-galactonate = 2-dehydro-3-deoxy-D-galactonate + H2O. The protein operates within carbohydrate acid metabolism; D-galactonate degradation; D-glyceraldehyde 3-phosphate and pyruvate from D-galactonate: step 1/3. Catalyzes the dehydration of D-galactonate to 2-keto-3-deoxy-D-galactonate. The protein is D-galactonate dehydratase of Klebsiella pneumoniae (strain 342).